Consider the following 524-residue polypeptide: Lysine--tRNA ligase (524 aa).

2 residues coordinate Mg(2+): glutamate 431 and glutamate 438.

It belongs to the class-II aminoacyl-tRNA synthetase family. In terms of assembly, homodimer. Mg(2+) serves as cofactor.

It is found in the cytoplasm. The enzyme catalyses tRNA(Lys) + L-lysine + ATP = L-lysyl-tRNA(Lys) + AMP + diphosphate. In Chlamydia muridarum (strain MoPn / Nigg), this protein is Lysine--tRNA ligase (lysS).